The primary structure comprises 313 residues: Formimidoylglutamase (313 aa).

H130, D155, H157, D159, D241, and D243 together coordinate Mn(2+).

This sequence belongs to the arginase family. Requires Mn(2+) as cofactor.

It carries out the reaction N-formimidoyl-L-glutamate + H2O = formamide + L-glutamate. It participates in amino-acid degradation; L-histidine degradation into L-glutamate; L-glutamate from N-formimidoyl-L-glutamate (hydrolase route): step 1/1. Functionally, catalyzes the conversion of N-formimidoyl-L-glutamate to L-glutamate and formamide. The sequence is that of Formimidoylglutamase from Salmonella enteritidis PT4 (strain P125109).